The following is an 860-amino-acid chain: Probable linoleate 9S-lipoxygenase 4 (860 aa).

A PLAT domain is found at 29 to 159; sequence NALDFTDLAG…RYKSDRIFFA (131 aa). Residues 162-860 enclose the Lipoxygenase domain; sequence PYLPSETPEL…GKGIPNSVSI (699 aa). The disordered stretch occupies residues 209–246; it reads PDQGKENVRTTLGGSADYPYPRRGRTGRPPTRTDPKSE. Positions 521, 526, 712, 716, and 860 each coordinate Fe cation.

The protein belongs to the lipoxygenase family. As to quaternary structure, monomer. Requires Fe cation as cofactor. In terms of tissue distribution, expressed in tubers and roots. Not detected in leaves, flowers, stems, shoot tips, or axillary buds.

Its subcellular location is the cytoplasm. The enzyme catalyses (9Z,12Z)-octadecadienoate + O2 = (9S)-hydroperoxy-(10E,12Z)-octadecadienoate. The protein operates within lipid metabolism; oxylipin biosynthesis. Its function is as follows. Plant lipoxygenases may be involved in a number of diverse aspects of plant physiology including growth and development, pest resistance, and senescence or responses to wounding. Catalyzes the hydroperoxidation of lipids containing a cis,cis-1,4-pentadiene structure. This is Probable linoleate 9S-lipoxygenase 4 (LOX1.4) from Solanum tuberosum (Potato).